The primary structure comprises 383 residues: 1-deoxy-D-xylulose 5-phosphate reductoisomerase (383 aa).

Positions 10, 11, 12, 13, 36, 37, 38, and 122 each coordinate NADPH. Residue lysine 123 participates in 1-deoxy-D-xylulose 5-phosphate binding. Glutamate 124 lines the NADPH pocket. Position 148 (aspartate 148) interacts with Mn(2+). Residues serine 149, glutamate 150, serine 174, and histidine 197 each contribute to the 1-deoxy-D-xylulose 5-phosphate site. Position 150 (glutamate 150) interacts with Mn(2+). Position 203 (glycine 203) interacts with NADPH. 1-deoxy-D-xylulose 5-phosphate-binding residues include serine 210, asparagine 215, lysine 216, and glutamate 219. A Mn(2+)-binding site is contributed by glutamate 219.

This sequence belongs to the DXR family. It depends on Mg(2+) as a cofactor. Requires Mn(2+) as cofactor.

It carries out the reaction 2-C-methyl-D-erythritol 4-phosphate + NADP(+) = 1-deoxy-D-xylulose 5-phosphate + NADPH + H(+). It participates in isoprenoid biosynthesis; isopentenyl diphosphate biosynthesis via DXP pathway; isopentenyl diphosphate from 1-deoxy-D-xylulose 5-phosphate: step 1/6. In terms of biological role, catalyzes the NADPH-dependent rearrangement and reduction of 1-deoxy-D-xylulose-5-phosphate (DXP) to 2-C-methyl-D-erythritol 4-phosphate (MEP). In Bacillus subtilis (strain 168), this protein is 1-deoxy-D-xylulose 5-phosphate reductoisomerase.